The chain runs to 1015 residues: MQPTEDLPRGTPLSSTGHPLPRRTSPEQSVTLRHHQLARDASLKASLGSAPPNDSNENSSSPRRASSGESHETGQSDAKKWFNQSNQNPTATFDSNAMDVDPPFFQKESDSSNEDKPYQFPPATIRIQSNARSSSADDYRSVIDDLTVEIQKLKEELKRYKQRGPDMLRKDKLFEIKIHGLPKRKKRELEATLREFTATLEGSPNTSSSKRNSTTKPSRHATRDRMYSGSGSKSQSKHASSSSGSHTRPVDSAYASMSTGAGSSGTSLNRPQGGSRFKTNEQKVDHYLREIPEGLYPRFVSMTEKEKKKLVVRRLEQIFTGKIGGKHVRRTQPTLTPAVSIALPAVQATSIDFSPQQQQQQQQQQQQQPKSNFITNPGATFSSVPEPLREARILPQEHQYGHVAGQKGRSHDIGSASNSNEDQTESGGNGNSSSNGNDSGTNPSPPMPPPPEQRPTRPRDLDPDRIQIPSENMEYIRHLGLVPPELLTNPPERTSFDFHPDEEGWVYLNLLCNMAQLHIMSVTPDFVRNAVVDLSAKFQLSPDGRKIRWRGGTDGTKFSSESSGDLSQRSPETDDTENTKGDNHKRQKTGHSTGDSGSSGNNLPKFGGPQVSASSESFHYKPLFLHQQSPNEQSSMEDGTLSSFGPIEESNADSRWGQSGSGASNRRKRRRDGAIIYYSGAPFCTDLSGDPGDTSPATYMLSSERERPDAQGQFARPLPFRSGSGSSITRRPLSDAHLNLGSIPKLQLLNEGVSIPELVTDSGDESSKLSMEFPWSDEPQILEVRPLEPCGLGGVRPEDHFMVVVTTRRSKLDARVGQRLEGQRKLSEEMTDIVVNRLATMSTSSPRPSVRRLSNMSDSSKIKIEYLSGRIKRLEPVSLPPPAIFFPPFSADSCSEDDFGSDGDDEFNSSEEFMSRRANPHQSDDYPDGVDLSSGDEDGEEPEDDIDASRMVDDMSLPGLGRVPRGSQASTEVVPGSSRGRSNSASAEAVLRAGGSSAATAGGVESDFSISSSQG.

Disordered stretches follow at residues 1–138 (MQPT…SADD), 183–285 (KRKK…QKVD), 352–383 (DFSP…TFSS), 402–465 (HVAG…DPDR), 544–614 (GRKI…VSAS), 629–668 (SPNE…NRRK), 706–728 (ERPD…GSSI), and 895–1015 (SEDD…SSQG). A compositionally biased stretch (low complexity) spans 49 to 68 (SAPPNDSNENSSSPRRASSG). A compositionally biased stretch (basic and acidic residues) spans 69 to 80 (ESHETGQSDAKK). Polar residues predominate over residues 82-95 (FNQSNQNPTATFDS). A compositionally biased stretch (basic and acidic residues) spans 107–117 (KESDSSNEDKP). Composition is skewed to low complexity over residues 203–216 (SPNT…STTK), 228–267 (SGSG…SGTS), and 356–368 (QQQQ…QQQQ). Positions 369–383 (PKSNFITNPGATFSS) are enriched in polar residues. Residues 431 to 442 (NSSSNGNDSGTN) show a composition bias toward low complexity. Pro residues predominate over residues 443 to 453 (PSPPMPPPPEQ). The span at 454–465 (RPTRPRDLDPDR) shows a compositional bias: basic and acidic residues. Positions 556-570 (TKFSSESSGDLSQRS) are enriched in polar residues. The short motif at 584 to 588 (HKRQK) is the Nuclear localization signal element. Low complexity predominate over residues 590–600 (GHSTGDSGSSG). Over residues 629–643 (SPNEQSSMEDGTLSS) the composition is skewed to polar residues. 2 stretches are compositionally biased toward acidic residues: residues 895 to 909 (SEDD…EFNS) and 934 to 946 (SGDE…EDDI). Residues 976 to 1003 (GSSRGRSNSASAEAVLRAGGSSAATAGG) are compositionally biased toward low complexity.

It belongs to the FRQ family.

The protein localises to the nucleus. In terms of biological role, circadian clock component involved in the generation of biological rhythms, in particular in rhythm stability, period length, and temperature compensation. Behaves as a negative element in circadian transcriptional loop. This is Frequency clock protein (FRQ) from Trichoderma spinulosum (Hypocrea spinulosa).